We begin with the raw amino-acid sequence, 235 residues long: Large ribosomal subunit protein uL1 (235 aa).

This sequence belongs to the universal ribosomal protein uL1 family. Part of the 50S ribosomal subunit.

In terms of biological role, binds directly to 23S rRNA. The L1 stalk is quite mobile in the ribosome, and is involved in E site tRNA release. Protein L1 is also a translational repressor protein, it controls the translation of the L11 operon by binding to its mRNA. The protein is Large ribosomal subunit protein uL1 of Prochlorococcus marinus (strain MIT 9301).